Here is a 760-residue protein sequence, read N- to C-terminus: ATP-dependent DNA helicase Hel308 (760 aa).

ATP is bound by residues Q28 and 46 to 53; that span reads IPTASGKT. In terms of domain architecture, Helicase ATP-binding spans 33–199; sequence EMGLLEKKNL…WLGAALVLSE (167 aa). Positions 144-147 match the DEAH box motif; the sequence is DEIH. The region spanning 232-426 is the Helicase C-terminal domain; it reads AVNLVLDTIK…SKLGTENALR (195 aa).

Belongs to the helicase family. Hel308 subfamily. Monomer.

The enzyme catalyses Couples ATP hydrolysis with the unwinding of duplex DNA by translocating in the 3'-5' direction.. It catalyses the reaction ATP + H2O = ADP + phosphate + H(+). Functionally, DNA-dependent ATPase and 3'-5' DNA helicase that may be involved in repair of stalled replication forks. This is ATP-dependent DNA helicase Hel308 from Methanococcoides burtonii (strain DSM 6242 / NBRC 107633 / OCM 468 / ACE-M).